A 218-amino-acid polypeptide reads, in one-letter code: Putative copper transporter crmD (218 aa).

2 consecutive transmembrane segments (helical) span residues 37 to 57 (YSLT…LGVL) and 176 to 196 (MLAV…GIVV).

The protein belongs to the copper transporter (Ctr) (TC 1.A.56) family. SLC31A subfamily.

The protein localises to the membrane. The enzyme catalyses Cu(2+)(in) = Cu(2+)(out). In terms of biological role, putative copper transporter; part of the crm gene cluster that mediates the biosynthesis of a yet unidentified copper-responsive metabolite. Probably involved in the transport of copper, even if it does not act as a major copper transporter. In contrast to crmA, is not involved in the biosynthesis of fumivalines or fumicicolins. In Aspergillus fumigatus (strain ATCC MYA-4609 / CBS 101355 / FGSC A1100 / Af293) (Neosartorya fumigata), this protein is Putative copper transporter crmD.